Reading from the N-terminus, the 365-residue chain is NADH-quinone oxidoreductase subunit H 2 (365 aa).

A run of 8 helical transmembrane segments spans residues 1-21 (MFVV…VVWA), 71-91 (LAPV…PFAP), 100-120 (VGVF…FLAG), 136-156 (IAQV…VVLI), 199-219 (FVSW…VFFI), 254-274 (ILFL…VVLF), 301-321 (IAGY…VVFL), and 342-362 (WKIL…WVVW).

It belongs to the complex I subunit 1 family. In terms of assembly, NDH-1 is composed of 14 different subunits. Subunits NuoA, H, J, K, L, M, N constitute the membrane sector of the complex.

It localises to the cell inner membrane. The enzyme catalyses a quinone + NADH + 5 H(+)(in) = a quinol + NAD(+) + 4 H(+)(out). Its function is as follows. NDH-1 shuttles electrons from NADH, via FMN and iron-sulfur (Fe-S) centers, to quinones in the respiratory chain. The immediate electron acceptor for the enzyme in this species is believed to be ubiquinone. Couples the redox reaction to proton translocation (for every two electrons transferred, four hydrogen ions are translocated across the cytoplasmic membrane), and thus conserves the redox energy in a proton gradient. This subunit may bind ubiquinone. In Cytophaga hutchinsonii (strain ATCC 33406 / DSM 1761 / CIP 103989 / NBRC 15051 / NCIMB 9469 / D465), this protein is NADH-quinone oxidoreductase subunit H 2.